The primary structure comprises 367 residues: MSDARRYHALPSPFPMKRGGQLQGARLAYETWGRLSPGCDNAVLILTGLSPSAHAASHPDGDTSPGWWEGMLGPGKAIDTDRWYVICVNSLGSDKGSTGPASPDPATGAPYRLSFPELALEDVASAAHDLVKALGIARLACLIGCSMGGMSALAYMLQYEGEVEAHISVDTAPQAQPFAIAIRSLQREAIRLDPNWQDGHYTDAAYPETGMAMARKLGVITYRSAMEWNGRFARIRLDGDQRPDEPFAREFQVESYLEHHAQRFVRRFDPACYLYLTRASDWFDVAEYGEGSVMQGLARIHVRRALVIGVSTDILFPLEQQQQIAEGLQAAGAEVDFVALDSPQGHDAFLVDIENYSAAIGGFLRTL.

The AB hydrolase-1 domain maps to 41–351 (NAVLILTGLS…SPQGHDAFLV (311 aa)). The important for substrate specificity stretch occupies residues 48 to 51 (GLSP). S146 acts as the Nucleophile in catalysis. R215 is a binding site for substrate. Active-site residues include D313 and H346. D347 lines the substrate pocket.

This sequence belongs to the AB hydrolase superfamily. MetX family. In terms of assembly, homodimer.

The protein localises to the cytoplasm. It carries out the reaction succinyl-CoA + L-serine = O-succinyl-L-serine + CoA. It catalyses the reaction L-homoserine + succinyl-CoA = O-succinyl-L-homoserine + CoA. Its pathway is amino-acid biosynthesis; L-cysteine biosynthesis; L-cysteine from L-serine: step 1/2. Its function is as follows. Transfers a succinyl group from succinyl-CoA to L-serine, forming succinyl-L-serine. In vitro, also has homoserine succinyl transferase activity. The polypeptide is Serine O-succinyltransferase (Frateuria aurantia (strain ATCC 33424 / DSM 6220 / KCTC 2777 / LMG 1558 / NBRC 3245 / NCIMB 13370) (Acetobacter aurantius)).